The primary structure comprises 407 residues: MRQLLPGDTAWRNIRLATMDPQQQTPYGLVDNLALIVREGLICDIVPKTQIPVSGDNIHDMQGRLVTPGLIDCHTHLVFAGSRAGEWEQRLNGVSYQYISAQGGGINATVSATRACAEDTLYLLAHERMMRLINEGVTLLEIKSGYGLELATEEKMLRVAAKLAAENAIDISSTLLAAHATPVEYHGDPDGYIALVCETIIPQLWKKRLFEAVDLFCESVGFSVAHSERVLQTAKALGIPVKGHVEQLSLLGGAQLVSRYQGLSADHIEYLDEAGVAAMRDGGTVGVLLPGAFYFLGETQRPPVELLRRYQVPVAVASDFNPGTSPFCSLHLAMNMACVQFGLTPEEAWAGVTRHAARALGRQATHGQLRAGFRADFVVWDAEQPVEIVYEPGRNPLYQRVYQGQIT.

Fe(3+)-binding residues include histidine 74 and histidine 76. Zn(2+) contacts are provided by histidine 74 and histidine 76. 4-imidazolone-5-propanoate-binding residues include arginine 83, tyrosine 146, and histidine 179. Tyrosine 146 serves as a coordination point for N-formimidoyl-L-glutamate. Histidine 244 is a Fe(3+) binding site. Histidine 244 contacts Zn(2+). Glutamine 247 serves as a coordination point for 4-imidazolone-5-propanoate. Aspartate 319 contacts Fe(3+). Aspartate 319 serves as a coordination point for Zn(2+). 2 residues coordinate N-formimidoyl-L-glutamate: asparagine 321 and glycine 323. A 4-imidazolone-5-propanoate-binding site is contributed by threonine 324.

Belongs to the metallo-dependent hydrolases superfamily. HutI family. Zn(2+) serves as cofactor. Requires Fe(3+) as cofactor.

Its subcellular location is the cytoplasm. It carries out the reaction 4-imidazolone-5-propanoate + H2O = N-formimidoyl-L-glutamate. The protein operates within amino-acid degradation; L-histidine degradation into L-glutamate; N-formimidoyl-L-glutamate from L-histidine: step 3/3. Its function is as follows. Catalyzes the hydrolytic cleavage of the carbon-nitrogen bond in imidazolone-5-propanoate to yield N-formimidoyl-L-glutamate. It is the third step in the universal histidine degradation pathway. The protein is Imidazolonepropionase of Salmonella arizonae (strain ATCC BAA-731 / CDC346-86 / RSK2980).